Reading from the N-terminus, the 473-residue chain is Sarcalumenin (473 aa).

The N-terminal stretch at 1-20 (MRALVLLGCLLASLLFSGQA) is a signal peptide. The Dynamin-type G domain maps to 90-331 (ITSKPMVLFL…IENRLENKIA (242 aa)). Positions 100–107 (GPWSVGKS) are G1 motif. Positions 128–129 (EP) are G2 motif. Residues 190–193 (DTPG) form a G3 motif region. The tract at residues 255–258 (NKAD) is G4 motif. Position 278 (P278) is a region of interest, G5 motif. N-linked (GlcNAc...) asparagine glycans are attached at residues N281 and N389.

The protein belongs to the TRAFAC class dynamin-like GTPase superfamily. Dynamin/Fzo/YdjA family. Post-translationally, N-glycosylated.

It is found in the sarcoplasmic reticulum lumen. The protein resides in the sarcoplasmic reticulum membrane. This Homo sapiens (Human) protein is Sarcalumenin (SRL).